The following is a 339-amino-acid chain: Malate dehydrogenase 3, cytoplasmic (339 aa).

Residues 22-23 (NI), aspartate 49, and glycine 96 contribute to the NAD(+) site. Arginine 105 is an oxaloacetate binding site. NAD(+)-binding residues include glutamine 119 and asparagine 138. The oxaloacetate site is built by asparagine 138, arginine 169, histidine 194, and serine 249. The active-site Proton acceptor is the histidine 194.

Belongs to the LDH/MDH superfamily. MDH type 2 family. Expressed in rosette leaves at low levels.

The protein localises to the cytoplasm. It catalyses the reaction (S)-malate + NAD(+) = oxaloacetate + NADH + H(+). Functionally, catalyzes a reversible NAD-dependent dehydrogenase reaction involved in central metabolism and redox homeostasis between organelle compartments. This is Malate dehydrogenase 3, cytoplasmic from Arabidopsis thaliana (Mouse-ear cress).